The following is a 141-amino-acid chain: VLSPADKTNVKDAWGKVGGHAGEYGAEALERMFLSFPTTKTYFPHFDLSHGSAQVKGHGKKVADALTLAVGHVDDMPQALSALSDLHAHKLRVDPVNFKLLSHCLLVTLAAHLPAEFTPAVHASLDKFLASVSTVLTSKYR.

Residues 1–141 form the Globin domain; sequence VLSPADKTNV…VSTVLTSKYR (141 aa). Serine 3 bears the Phosphoserine mark. Residue lysine 7 is modified to N6-succinyllysine. The residue at position 8 (threonine 8) is a Phosphothreonine. The residue at position 11 (lysine 11) is an N6-succinyllysine. Lysine 16 is modified (N6-acetyllysine; alternate). Lysine 16 carries the N6-succinyllysine; alternate modification. Tyrosine 24 is modified (phosphotyrosine). Phosphoserine is present on serine 35. Lysine 40 carries the N6-succinyllysine modification. Serine 49 carries the post-translational modification Phosphoserine. Residue histidine 58 coordinates O2. Histidine 87 provides a ligand contact to heme b. Serine 102 bears the Phosphoserine mark. Position 108 is a phosphothreonine (threonine 108). Residues serine 124 and serine 131 each carry the phosphoserine modification. 2 positions are modified to phosphothreonine: threonine 134 and threonine 137. Position 138 is a phosphoserine (serine 138).

This sequence belongs to the globin family. Heterotetramer of two alpha chains and two beta chains. Red blood cells.

Its function is as follows. Involved in oxygen transport from the lung to the various peripheral tissues. The protein is Hemoglobin subunit alpha-1/2 of Macaca sinica (Toque macaque).